The primary structure comprises 146 residues: VHLTGEEKSAVTALWGKVNVEEVGGEALGRLLVVYPWTQRFFESFGDLSTADAVMKNPNVKKHGQKVLASFGEGLKHLDDLKGTFAALSELHCDKLHVDPENFRLLGNVLVVVLARHFGKEFTPELQSAYQKVVAGVATALAHKYH.

An N-acetylvaline modification is found at V1. Positions 2–146 constitute a Globin domain; sequence HLTGEEKSAV…VATALAHKYH (145 aa). T12 is modified (phosphothreonine). Residue S44 is modified to Phosphoserine. Position 63 (H63) interacts with heme b. N6-acetyllysine is present on K82. A heme b-binding site is contributed by H92. C93 is modified (S-nitrosocysteine). K144 is modified (N6-acetyllysine).

This sequence belongs to the globin family. In terms of assembly, heterotetramer of two alpha chains and two beta chains. In terms of tissue distribution, red blood cells.

Its function is as follows. Involved in oxygen transport from the lung to the various peripheral tissues. This is Hemoglobin subunit beta (HBB) from Tursiops truncatus (Atlantic bottle-nosed dolphin).